The following is a 143-amino-acid chain: Putative pre-16S rRNA nuclease (143 aa).

Belongs to the YqgF nuclease family.

The protein resides in the cytoplasm. In terms of biological role, could be a nuclease involved in processing of the 5'-end of pre-16S rRNA. This Ralstonia pickettii (strain 12J) protein is Putative pre-16S rRNA nuclease.